The chain runs to 316 residues: Probable cell division protein WhiA (316 aa).

The segment at residues 275 to 309 is a DNA-binding region (H-T-H motif); sequence TLKELGEMVASGKISKSGINHRLRKLDEIAEQLRT.

It belongs to the WhiA family.

It is found in the cytoplasm. It localises to the nucleoid. Its function is as follows. Involved in cell division and chromosome segregation. May influence the activity of FtsZ. Binds DNA, but does not seem to function as a transcription factor. The polypeptide is Probable cell division protein WhiA (Bacillus subtilis (strain 168)).